Consider the following 147-residue polypeptide: Prefoldin subunit alpha (147 aa).

This sequence belongs to the prefoldin subunit alpha family. As to quaternary structure, heterohexamer of two alpha and four beta subunits.

Its subcellular location is the cytoplasm. Molecular chaperone capable of stabilizing a range of proteins. Seems to fulfill an ATP-independent, HSP70-like function in archaeal de novo protein folding. The protein is Prefoldin subunit alpha (pfdA) of Saccharolobus solfataricus (strain ATCC 35092 / DSM 1617 / JCM 11322 / P2) (Sulfolobus solfataricus).